We begin with the raw amino-acid sequence, 387 residues long: Succinate--CoA ligase [ADP-forming] subunit beta (387 aa).

In terms of domain architecture, ATP-grasp spans Lys-9–Arg-244. ATP is bound by residues Lys-46, Gly-53 to Gly-55, Glu-99, Cys-102, and Glu-107. Residues Asn-199 and Asp-213 each contribute to the Mg(2+) site. Substrate is bound by residues Asn-264 and Gly-321 to Val-323.

The protein belongs to the succinate/malate CoA ligase beta subunit family. As to quaternary structure, heterotetramer of two alpha and two beta subunits. The cofactor is Mg(2+).

It carries out the reaction succinate + ATP + CoA = succinyl-CoA + ADP + phosphate. It catalyses the reaction GTP + succinate + CoA = succinyl-CoA + GDP + phosphate. It functions in the pathway carbohydrate metabolism; tricarboxylic acid cycle; succinate from succinyl-CoA (ligase route): step 1/1. Its function is as follows. Succinyl-CoA synthetase functions in the citric acid cycle (TCA), coupling the hydrolysis of succinyl-CoA to the synthesis of either ATP or GTP and thus represents the only step of substrate-level phosphorylation in the TCA. The beta subunit provides nucleotide specificity of the enzyme and binds the substrate succinate, while the binding sites for coenzyme A and phosphate are found in the alpha subunit. This is Succinate--CoA ligase [ADP-forming] subunit beta from Legionella pneumophila (strain Corby).